The primary structure comprises 112 residues: Putative pterin-4-alpha-carbinolamine dehydratase (112 aa).

Belongs to the pterin-4-alpha-carbinolamine dehydratase family.

The enzyme catalyses (4aS,6R)-4a-hydroxy-L-erythro-5,6,7,8-tetrahydrobiopterin = (6R)-L-erythro-6,7-dihydrobiopterin + H2O. The chain is Putative pterin-4-alpha-carbinolamine dehydratase from Vibrio parahaemolyticus serotype O3:K6 (strain RIMD 2210633).